A 92-amino-acid chain; its full sequence is Cell division topological specificity factor (92 aa).

It belongs to the MinE family.

Its function is as follows. Prevents the cell division inhibition by proteins MinC and MinD at internal division sites while permitting inhibition at polar sites. This ensures cell division at the proper site by restricting the formation of a division septum at the midpoint of the long axis of the cell. The sequence is that of Cell division topological specificity factor from Symbiobacterium thermophilum (strain DSM 24528 / JCM 14929 / IAM 14863 / T).